A 415-amino-acid polypeptide reads, in one-letter code: MPETNPSLPSWLNRGMADLFPAGEPSDVDQSLAARLAAAEAEGRPLRVKLGIDPTGSNIHLGHSILFRKLRAFQDAGHIAVLIIGDFTARIGDPTGKSATRVQLSKNDVAVNASTYLRQLGQDQPKETALLDFETPGRLEVRYNSEWLEGMDLPAVIGLLGTGTVGQMLAKEDFSNRYNSGTPIALHEFLYPLLQGYDSVAVNADVELGGTDQKFNVAMGRDLQRHFGRGTQFGLLLPILVGLDGAQKMSKTLGNTVGLEDDPLSMYSKLEKVGDTAINDYVTLLTDLNVEALPENPREKQKAMALAVTATRHGTDAAAKAQLDAGNLVGGAGDASADVPEASLLAVNFPAKAFYLMSAVGICASSSEARRQIKGGAARLDGEKITDPNQEFASAAELDGRVLQLGKKTFRRLTA.

A 'HIGH' region motif is present at residues 54 to 63 (PTGSNIHLGH). The short motif at 248–252 (KMSKT) is the 'KMSKS' region element. Residue Lys-251 participates in ATP binding. The 65-residue stretch at 351–415 (AKAFYLMSAV…GKKTFRRLTA (65 aa)) folds into the S4 RNA-binding domain.

It belongs to the class-I aminoacyl-tRNA synthetase family. TyrS type 2 subfamily. As to quaternary structure, homodimer.

It is found in the cytoplasm. The enzyme catalyses tRNA(Tyr) + L-tyrosine + ATP = L-tyrosyl-tRNA(Tyr) + AMP + diphosphate + H(+). Functionally, catalyzes the attachment of tyrosine to tRNA(Tyr) in a two-step reaction: tyrosine is first activated by ATP to form Tyr-AMP and then transferred to the acceptor end of tRNA(Tyr). The chain is Tyrosine--tRNA ligase from Synechococcus sp. (strain CC9902).